The following is a 350-amino-acid chain: Protein-glutamate methylesterase/protein-glutamine glutaminase (350 aa).

In terms of domain architecture, Response regulatory spans 5–122 (KVLCVDDSAL…RDGLIEYSEV (118 aa)). A 4-aspartylphosphate modification is found at aspartate 56. Residues 152–346 (PFASSEKLVI…ERILTRLGDR (195 aa)) form the CheB-type methylesterase domain. Residues serine 165, histidine 191, and aspartate 288 contribute to the active site.

This sequence belongs to the CheB family. Post-translationally, phosphorylated by CheA. Phosphorylation of the N-terminal regulatory domain activates the methylesterase activity.

It is found in the cytoplasm. It carries out the reaction [protein]-L-glutamate 5-O-methyl ester + H2O = L-glutamyl-[protein] + methanol + H(+). The enzyme catalyses L-glutaminyl-[protein] + H2O = L-glutamyl-[protein] + NH4(+). In terms of biological role, involved in chemotaxis. Part of a chemotaxis signal transduction system that modulates chemotaxis in response to various stimuli. Catalyzes the demethylation of specific methylglutamate residues introduced into the chemoreceptors (methyl-accepting chemotaxis proteins or MCP) by CheR. Also mediates the irreversible deamidation of specific glutamine residues to glutamic acid. In Bordetella parapertussis (strain 12822 / ATCC BAA-587 / NCTC 13253), this protein is Protein-glutamate methylesterase/protein-glutamine glutaminase.